The following is a 62-amino-acid chain: MAKRCALTFKGPMVGNHVSHANNKNKRRSLPNLRSIKIQLDDGTTKRIKVAASTLRTMRKGA.

Belongs to the bacterial ribosomal protein bL28 family.

The polypeptide is Large ribosomal subunit protein bL28 (Helicobacter pylori (strain HPAG1)).